The sequence spans 460 residues: Indoleacetamide hydrolase (460 aa).

Catalysis depends on charge relay system residues Lys-71 and Ser-146. Catalysis depends on Ser-169, which acts as the Acyl-ester intermediate.

It belongs to the amidase family.

It participates in plant hormone metabolism; auxin biosynthesis. Its function is as follows. Hydrolyzes indole-3-acetamide (IAM) into indole-3-acetic acid (IAA). This Pantoea agglomerans pv. gypsophilae (Erwinia herbicola) protein is Indoleacetamide hydrolase (iaaH).